We begin with the raw amino-acid sequence, 243 residues long: Ribonuclease PH (243 aa).

Residues Arg84 and 122–124 each bind phosphate; that span reads GTR.

Belongs to the RNase PH family. In terms of assembly, homohexameric ring arranged as a trimer of dimers.

The catalysed reaction is tRNA(n+1) + phosphate = tRNA(n) + a ribonucleoside 5'-diphosphate. In terms of biological role, phosphorolytic 3'-5' exoribonuclease that plays an important role in tRNA 3'-end maturation. Removes nucleotide residues following the 3'-CCA terminus of tRNAs; can also add nucleotides to the ends of RNA molecules by using nucleoside diphosphates as substrates, but this may not be physiologically important. Probably plays a role in initiation of 16S rRNA degradation (leading to ribosome degradation) during starvation. The sequence is that of Ribonuclease PH from Bdellovibrio bacteriovorus (strain ATCC 15356 / DSM 50701 / NCIMB 9529 / HD100).